A 184-amino-acid chain; its full sequence is Major urinary protein 3 (184 aa).

The first 22 residues, 1–22 (MKLLLPLLLLLCLELTLVCIHA), serve as a signal peptide directing secretion. Asn-66 carries N-linked (GlcNAc...) asparagine glycosylation. Residues Cys-86 and Cys-179 are joined by a disulfide bond.

This sequence belongs to the calycin superfamily. Lipocalin family. In terms of processing, glycosylated. Abundant in the urine of adult male mice but absent from that of females.

It localises to the secreted. In terms of biological role, binds pheromones that are released from drying urine of males. These pheromones affect the sexual behavior of females. In Mus musculus (Mouse), this protein is Major urinary protein 3 (Mup3).